We begin with the raw amino-acid sequence, 249 residues long: MAKSPARRCTAKVRRVLSRSVLILCWSLLGAAPAHADDSRLGWPLRPPPAVVRQFDAASPNWNPGHRGVDLAGRPGQPVYAAGSATVVFAGLLAGRPVVSLAHPGGLRTSYEPVVAQVRVGQPVSAPTVIGALAAGHPGCQAAACLHWGAMWGPASGANYVDPLGLLKSTPIRLKPLSSEGRTLHYRQAEPVFVNEAAAGALAGAGHRKSPKQGVFRGAAQGGDIVARQPPGRWVCPSSAGGPIGWHRQ.

The N-terminal stretch at 1 to 36 (MAKSPARRCTAKVRRVLSRSVLILCWSLLGAAPAHA) is a signal peptide. The segment at 227 to 249 (ARQPPGRWVCPSSAGGPIGWHRQ) is disordered.

This is an uncharacterized protein from Mycobacterium tuberculosis (strain CDC 1551 / Oshkosh).